Reading from the N-terminus, the 127-residue chain is Fatty acid-binding protein, liver-type (127 aa).

It belongs to the calycin superfamily. Fatty-acid binding protein (FABP) family.

The protein localises to the cytoplasm. This is Fatty acid-binding protein, liver-type (fabp1) from Epinephelus coioides (Orange-spotted grouper).